The sequence spans 197 residues: dTTP/UTP pyrophosphatase (197 aa).

Catalysis depends on D70, which acts as the Proton acceptor.

It belongs to the Maf family. YhdE subfamily. It depends on a divalent metal cation as a cofactor.

The protein resides in the cytoplasm. It catalyses the reaction dTTP + H2O = dTMP + diphosphate + H(+). The catalysed reaction is UTP + H2O = UMP + diphosphate + H(+). In terms of biological role, nucleoside triphosphate pyrophosphatase that hydrolyzes dTTP and UTP. May have a dual role in cell division arrest and in preventing the incorporation of modified nucleotides into cellular nucleic acids. The polypeptide is dTTP/UTP pyrophosphatase (yceF) (Shigella dysenteriae serotype 1 (strain Sd197)).